Here is a 253-residue protein sequence, read N- to C-terminus: Dihydroanticapsin 7-dehydrogenase (253 aa).

9-31 (LITGGASGIGYAAVQAFLGQQAN) lines the NAD(+) pocket. Ser139 is a substrate binding site. Tyr152 serves as the catalytic Proton acceptor.

The protein belongs to the short-chain dehydrogenases/reductases (SDR) family.

It catalyses the reaction L-dihydroanticapsin + NAD(+) = L-anticapsin + NADH + H(+). It functions in the pathway antibiotic biosynthesis; bacilysin biosynthesis. Part of the bacABCDEFG operon responsible for the biosynthesis of bacilysin, an irreversible inactivator of the glutaminase domain of glucosamine synthetase. Catalyzes the dehydrogenation of the C7-hydroxyl group in the 4S-tetrahydrotyrosine (4S-H4Tyr) to yield anticapsin (epoxycyclohexanonyl-Ala). It is not able to oxidize the 4R-H4Tyr diastereomer and the dihydrobacilysin dipeptide (L-Ala-4S-H4Tyr dipeptide). The polypeptide is Dihydroanticapsin 7-dehydrogenase (Bacillus subtilis (strain 168)).